The following is a 94-amino-acid chain: DNA-directed RNA polymerase subunit omega (94 aa).

The protein belongs to the RNA polymerase subunit omega family. In terms of assembly, the RNAP catalytic core consists of 2 alpha, 1 beta, 1 beta' and 1 omega subunit. When a sigma factor is associated with the core the holoenzyme is formed, which can initiate transcription.

It carries out the reaction RNA(n) + a ribonucleoside 5'-triphosphate = RNA(n+1) + diphosphate. In terms of biological role, promotes RNA polymerase assembly. Latches the N- and C-terminal regions of the beta' subunit thereby facilitating its interaction with the beta and alpha subunits. This is DNA-directed RNA polymerase subunit omega from Bifidobacterium longum (strain DJO10A).